Consider the following 635-residue polypeptide: Threonine--tRNA ligase (635 aa).

Positions 1–61 constitute a TGS domain; sequence MVSIRLPDGS…DRDASLAIVT (61 aa). The tract at residues 242–533 is catalytic; it reads DHRKLGKQLD…LIEHHAGAMP (292 aa). Residues Cys-333, His-384, and His-510 each contribute to the Zn(2+) site.

This sequence belongs to the class-II aminoacyl-tRNA synthetase family. Homodimer. Zn(2+) serves as cofactor.

The protein resides in the cytoplasm. It catalyses the reaction tRNA(Thr) + L-threonine + ATP = L-threonyl-tRNA(Thr) + AMP + diphosphate + H(+). Its function is as follows. Catalyzes the attachment of threonine to tRNA(Thr) in a two-step reaction: L-threonine is first activated by ATP to form Thr-AMP and then transferred to the acceptor end of tRNA(Thr). Also edits incorrectly charged L-seryl-tRNA(Thr). The protein is Threonine--tRNA ligase of Burkholderia vietnamiensis (strain G4 / LMG 22486) (Burkholderia cepacia (strain R1808)).